A 478-amino-acid chain; its full sequence is Sialidase-4 (478 aa).

The FRIP motif signature appears at 22-25; sequence YRVP. Arginine 23 and arginine 43 together coordinate substrate. Active-site proton acceptor residues include aspartate 47 and aspartate 48. A BNR 1 repeat occupies 127-138; it reads VTSCDAGLTWGS. 2 residues coordinate substrate: tyrosine 177 and tyrosine 179. The stretch at 200–211 is one BNR 2 repeat; the sequence is FYSDDHGISWHC. 2 residues coordinate substrate: glutamate 222 and arginine 238. The BNR 3 repeat unit spans residues 247-258; that stretch reads ALSADEGTSFLP. Disordered stretches follow at residues 285–307 and 335–359; these read IEPQ…CFNL and SRSP…PECP. Arginine 383 contacts substrate. The active-site Nucleophile is the tyrosine 413. Glutamate 434 is an active-site residue.

The protein belongs to the glycosyl hydrolase 33 family. Highly expressed in brain, particularly in hippocampus, and at lower levels in liver and spleen. Expressed in hippocampal neurons (at protein level).

The protein localises to the cell membrane. It localises to the endoplasmic reticulum membrane. Its subcellular location is the microsome membrane. The protein resides in the mitochondrion inner membrane. It is found in the mitochondrion outer membrane. The protein localises to the cell projection. It localises to the neuron projection. Its subcellular location is the lysosome lumen. The catalysed reaction is Hydrolysis of alpha-(2-&gt;3)-, alpha-(2-&gt;6)-, alpha-(2-&gt;8)- glycosidic linkages of terminal sialic acid residues in oligosaccharides, glycoproteins, glycolipids, colominic acid and synthetic substrates.. The enzyme catalyses a ganglioside GM3 + H2O = a beta-D-galactosyl-(1-&gt;4)-beta-D-glucosyl-(1&lt;-&gt;1)-ceramide + N-acetylneuraminate. It catalyses the reaction a ganglioside GM3 (d18:1(4E)) + H2O = a beta-D-Gal-(1-&gt;4)-beta-D-Glc-(1&lt;-&gt;1)-Cer(d18:1(4E)) + N-acetylneuraminate. It carries out the reaction a ganglioside GM2 + H2O = a ganglioside GA2 + N-acetylneuraminate. The catalysed reaction is a ganglioside GM2 (d18:1(4E)) + H2O = a ganglioside GA2 (d18:1(4E)) + N-acetylneuraminate. The enzyme catalyses a ganglioside GD1a + H2O = a ganglioside GM1 + N-acetylneuraminate. It catalyses the reaction a ganglioside GD1a (d18:1(4E)) + H2O = a ganglioside GM1 (d18:1(4E)) + N-acetylneuraminate. It carries out the reaction a ganglioside GD3 + H2O = a ganglioside GM3 + N-acetylneuraminate. The catalysed reaction is a ganglioside GD3 (d18:1(4E)) + H2O = a ganglioside GM3 (d18:1(4E)) + N-acetylneuraminate. Functionally, exo-alpha-sialidase that catalyzes the hydrolytic cleavage of the terminal sialic acid (N-acetylneuraminic acid, Neu5Ac) of a glycan moiety in the catabolism of glycolipids, glycoproteins and oligosacharides. Efficiently hydrolyzes gangliosides including alpha-(2-&gt;3)-sialylated GD1a and GM3 and alpha-(2-&gt;8)-sialylated GD3. Hydrolyzes poly-alpha-(2-&gt;8)-sialylated neural cell adhesion molecule NCAM1 likely at growth cones, suppressing neurite outgrowth in hippocampal neurons. May desialylate sialyl Lewis A and X antigens at the cell surface, down-regulating these glycan epitopes recognized by SELE/E selectin in the initiation of cell adhesion and extravasation. Has sialidase activity toward mucin, fetuin and sialyllactose. This is Sialidase-4 (Neu4) from Mus musculus (Mouse).